Here is a 105-residue protein sequence, read N- to C-terminus: Small ribosomal subunit protein uS10 (105 aa).

The protein belongs to the universal ribosomal protein uS10 family. In terms of assembly, part of the 30S ribosomal subunit.

Its function is as follows. Involved in the binding of tRNA to the ribosomes. This Anaplasma marginale (strain Florida) protein is Small ribosomal subunit protein uS10.